The chain runs to 73 residues: uncharacterized protein (73 aa).

The protein belongs to the asfivirus DP63R family.

This is an uncharacterized protein from Ornithodoros (relapsing fever ticks).